The primary structure comprises 366 residues: Chorismate synthase (366 aa).

Residues arginine 48 and arginine 54 each contribute to the NADP(+) site. Residues 125-127, 238-239, glycine 278, 293-297, and arginine 319 each bind FMN; these read RSS, NA, and KPTSS.

Belongs to the chorismate synthase family. As to quaternary structure, homotetramer. Requires FMNH2 as cofactor.

It catalyses the reaction 5-O-(1-carboxyvinyl)-3-phosphoshikimate = chorismate + phosphate. Its pathway is metabolic intermediate biosynthesis; chorismate biosynthesis; chorismate from D-erythrose 4-phosphate and phosphoenolpyruvate: step 7/7. Catalyzes the anti-1,4-elimination of the C-3 phosphate and the C-6 proR hydrogen from 5-enolpyruvylshikimate-3-phosphate (EPSP) to yield chorismate, which is the branch point compound that serves as the starting substrate for the three terminal pathways of aromatic amino acid biosynthesis. This reaction introduces a second double bond into the aromatic ring system. This is Chorismate synthase from Laribacter hongkongensis (strain HLHK9).